The chain runs to 419 residues: Vascular endothelial growth factor C (419 aa).

Positions 1-31 (MHLLGFFSVACSLLAAALLPGPREAPAAAAA) are cleaved as a signal peptide. Residues 32–111 (FESGLDLSDA…RTEETIKFAA (80 aa)) constitute a propeptide, or 102. Cystine bridges form between cysteine 131/cysteine 173, cysteine 162/cysteine 209, and cysteine 166/cysteine 211. 3 N-linked (GlcNAc...) asparagine glycosylation sites follow: asparagine 175, asparagine 205, and asparagine 240. Positions 228-419 (SLPATLPQCQ…PSYWKRPQMS (192 aa)) are excised as a propeptide. 4 repeat units span residues 280 to 295 (CGPN…QCVC), 304 to 319 (CGPH…QCVC), 328 to 343 (CGAN…QCVC), and 347 to 362 (CPRN…ACEC). The 4 X 16 AA repeats of C-X(10)-C-X-C-X(1,3)-C stretch occupies residues 280 to 362 (CGPNKELDEE…LNPGKCACEC (83 aa)).

The protein belongs to the PDGF/VEGF growth factor family. Homodimer; non-covalent and antiparallel. Interacts with FLT4/VEGFR3; the interaction is required for FLT4/VEGFR3 homodimarization and activation. Post-translationally, undergoes a complex proteolytic maturation which generates a variety of processed secreted forms with increased activity toward VEGFR-3, but only the fully processed form could activate VEGFR-2. VEGF-C first form an antiparallel homodimer linked by disulfide bonds. Before secretion, a cleavage occurs between Arg-227 and Ser-228 producing a heterotetramer. The next extracellular step of the processing removes the N-terminal propeptide. Finally the mature VEGF-C is composed mostly of two VEGF homology domains (VHDs) bound by non-covalent interactions. In terms of tissue distribution, expressed in the spleen. Expressed in the lymph node, thymus, appendix and bone marrow. Expressed in the heart, placenta, skeletal muscle, ovary and small intestine. Expressed in the prostate, testis and colon.

The protein resides in the secreted. Growth factor active in angiogenesis, and endothelial cell growth, stimulating their proliferation and migration and also has effects on the permeability of blood vessels. May function in angiogenesis of the venous and lymphatic vascular systems during embryogenesis, and also in the maintenance of differentiated lymphatic endothelium in adults. Binds and activates KDR/VEGFR2 and FLT4/VEGFR3 receptors. The protein is Vascular endothelial growth factor C (VEGFC) of Homo sapiens (Human).